Consider the following 339-residue polypeptide: D-alanine--D-alanine ligase (339 aa).

Positions 126–333 constitute an ATP-grasp domain; the sequence is KQVLDSAGIP…YSELVTRLVE (208 aa). Residue 158–213 participates in ATP binding; that stretch reads AAELGYPLFVKPANLGSSVGISKVGSPEELDAALTLAFGLDRRVILEAMTPHKPRE. Residues aspartate 286, glutamate 300, and asparagine 302 each coordinate Mg(2+).

It belongs to the D-alanine--D-alanine ligase family. Mg(2+) is required as a cofactor. The cofactor is Mn(2+).

The protein resides in the cytoplasm. It catalyses the reaction 2 D-alanine + ATP = D-alanyl-D-alanine + ADP + phosphate + H(+). It functions in the pathway cell wall biogenesis; peptidoglycan biosynthesis. Functionally, cell wall formation. The protein is D-alanine--D-alanine ligase of Deinococcus radiodurans (strain ATCC 13939 / DSM 20539 / JCM 16871 / CCUG 27074 / LMG 4051 / NBRC 15346 / NCIMB 9279 / VKM B-1422 / R1).